Consider the following 223-residue polypeptide: UPF0441 protein YgiB (223 aa).

Over residues 178–195 (TVPKTAMAPKPATTTTVT) the composition is skewed to low complexity. Residues 178–223 (TVPKTAMAPKPATTTTVTRGGFGESVAKQSTMQRSAAGTSTRSMGG) form a disordered region. Residues 204 to 223 (AKQSTMQRSAAGTSTRSMGG) are compositionally biased toward polar residues.

Belongs to the UPF0441 family.

This chain is UPF0441 protein YgiB, found in Salmonella paratyphi A (strain ATCC 9150 / SARB42).